Reading from the N-terminus, the 452-residue chain is Bifunctional protein GlmU (452 aa).

The tract at residues 1-233 is pyrophosphorylase; the sequence is MTDRPFAALI…AWEVAGVNSR (233 aa). UDP-N-acetyl-alpha-D-glucosamine is bound by residues 11-14, Lys-25, Gln-76, 81-82, 104-106, Gly-144, Glu-159, Asn-174, and Asn-231; these read LAAG, GT, and YGD. Residue Asp-106 coordinates Mg(2+). Asn-231 lines the Mg(2+) pocket. The tract at residues 234-254 is linker; that stretch reads AELAAVEAEWQRRRRLAAMAD. Residues 255 to 452 form an N-acetyltransferase region; sequence GATLIAPETV…AMKIKKAARK (198 aa). 2 residues coordinate UDP-N-acetyl-alpha-D-glucosamine: Arg-320 and Lys-338. The Proton acceptor role is filled by His-350. Residues Tyr-353 and Asn-364 each coordinate UDP-N-acetyl-alpha-D-glucosamine. Acetyl-CoA-binding positions include Ala-367, 373–374, Ser-392, Ala-410, and Arg-427; that span reads NY.

It in the N-terminal section; belongs to the N-acetylglucosamine-1-phosphate uridyltransferase family. This sequence in the C-terminal section; belongs to the transferase hexapeptide repeat family. Homotrimer. The cofactor is Mg(2+).

Its subcellular location is the cytoplasm. It carries out the reaction alpha-D-glucosamine 1-phosphate + acetyl-CoA = N-acetyl-alpha-D-glucosamine 1-phosphate + CoA + H(+). The enzyme catalyses N-acetyl-alpha-D-glucosamine 1-phosphate + UTP + H(+) = UDP-N-acetyl-alpha-D-glucosamine + diphosphate. It functions in the pathway nucleotide-sugar biosynthesis; UDP-N-acetyl-alpha-D-glucosamine biosynthesis; N-acetyl-alpha-D-glucosamine 1-phosphate from alpha-D-glucosamine 6-phosphate (route II): step 2/2. It participates in nucleotide-sugar biosynthesis; UDP-N-acetyl-alpha-D-glucosamine biosynthesis; UDP-N-acetyl-alpha-D-glucosamine from N-acetyl-alpha-D-glucosamine 1-phosphate: step 1/1. Its pathway is bacterial outer membrane biogenesis; LPS lipid A biosynthesis. Catalyzes the last two sequential reactions in the de novo biosynthetic pathway for UDP-N-acetylglucosamine (UDP-GlcNAc). The C-terminal domain catalyzes the transfer of acetyl group from acetyl coenzyme A to glucosamine-1-phosphate (GlcN-1-P) to produce N-acetylglucosamine-1-phosphate (GlcNAc-1-P), which is converted into UDP-GlcNAc by the transfer of uridine 5-monophosphate (from uridine 5-triphosphate), a reaction catalyzed by the N-terminal domain. This chain is Bifunctional protein GlmU, found in Rhizorhabdus wittichii (strain DSM 6014 / CCUG 31198 / JCM 15750 / NBRC 105917 / EY 4224 / RW1) (Sphingomonas wittichii).